A 470-amino-acid chain; its full sequence is Glutamate--tRNA ligase (470 aa).

The 'HIGH' region motif lies at 15–25; it reads PSPTGFLHIGG. Positions 240–244 match the 'KMSKS' region motif; that stretch reads KLSKR. An ATP-binding site is contributed by lysine 243.

Belongs to the class-I aminoacyl-tRNA synthetase family. Glutamate--tRNA ligase type 1 subfamily. In terms of assembly, monomer.

The protein localises to the cytoplasm. The catalysed reaction is tRNA(Glu) + L-glutamate + ATP = L-glutamyl-tRNA(Glu) + AMP + diphosphate. Functionally, catalyzes the attachment of glutamate to tRNA(Glu) in a two-step reaction: glutamate is first activated by ATP to form Glu-AMP and then transferred to the acceptor end of tRNA(Glu). This chain is Glutamate--tRNA ligase, found in Caulobacter vibrioides (strain ATCC 19089 / CIP 103742 / CB 15) (Caulobacter crescentus).